A 98-amino-acid chain; its full sequence is Aspartyl/glutamyl-tRNA(Asn/Gln) amidotransferase subunit C (98 aa).

Residues 77 to 98 (NEAPNPEGDFFRVPQILNTDEE) form a disordered region.

Belongs to the GatC family. In terms of assembly, heterotrimer of A, B and C subunits.

The catalysed reaction is L-glutamyl-tRNA(Gln) + L-glutamine + ATP + H2O = L-glutaminyl-tRNA(Gln) + L-glutamate + ADP + phosphate + H(+). It catalyses the reaction L-aspartyl-tRNA(Asn) + L-glutamine + ATP + H2O = L-asparaginyl-tRNA(Asn) + L-glutamate + ADP + phosphate + 2 H(+). Its function is as follows. Allows the formation of correctly charged Asn-tRNA(Asn) or Gln-tRNA(Gln) through the transamidation of misacylated Asp-tRNA(Asn) or Glu-tRNA(Gln) in organisms which lack either or both of asparaginyl-tRNA or glutaminyl-tRNA synthetases. The reaction takes place in the presence of glutamine and ATP through an activated phospho-Asp-tRNA(Asn) or phospho-Glu-tRNA(Gln). The sequence is that of Aspartyl/glutamyl-tRNA(Asn/Gln) amidotransferase subunit C from Crocosphaera subtropica (strain ATCC 51142 / BH68) (Cyanothece sp. (strain ATCC 51142)).